Here is a 318-residue protein sequence, read N- to C-terminus: MKPNVVSADALFEEFRGPLKWEWVAGLGASERRFDEVVVRLASSGADLVGYLNYIHPYRVQILGEREIAYLGSASPDDCKRRIARIVTLEPPVLVLADNQTAPDALVSMCERAQIPMFSTQESAAFVIDVLRAYLSKHFADRTTMHGVFMDILGLGVMITGESGLGKSELGLELISRGNGLVADDSVDLFRINQTTIEGKCPELLQNLLEVRGIGLLDIRAIFGETAVRRKMRLKLIVHLVRKETLERDYERLPYEPLTQDVLGVPVLKVVIQVVAGRNIAVLVEAAVRNTILQLRGIDTYQEFVERHRRAMEHDNGR.

Catalysis depends on residues H146 and K167. 161 to 168 (GESGLGKS) serves as a coordination point for ATP. S168 lines the Mg(2+) pocket. The Proton acceptor; for phosphorylation activity. Proton donor; for dephosphorylation activity role is filled by D185. An important for the catalytic mechanism of both phosphorylation and dephosphorylation region spans residues 209-218 (LEVRGIGLLD). Mg(2+) is bound at residue E210. The active site involves R252. Positions 273–278 (QVVAGR) are important for the catalytic mechanism of dephosphorylation.

This sequence belongs to the HPrK/P family. As to quaternary structure, homohexamer. It depends on Mg(2+) as a cofactor.

The catalysed reaction is [HPr protein]-L-serine + ATP = [HPr protein]-O-phospho-L-serine + ADP + H(+). It carries out the reaction [HPr protein]-O-phospho-L-serine + phosphate + H(+) = [HPr protein]-L-serine + diphosphate. Catalyzes the ATP- as well as the pyrophosphate-dependent phosphorylation of a specific serine residue in HPr, a phosphocarrier protein of the phosphoenolpyruvate-dependent sugar phosphotransferase system (PTS). HprK/P also catalyzes the pyrophosphate-producing, inorganic phosphate-dependent dephosphorylation (phosphorolysis) of seryl-phosphorylated HPr (P-Ser-HPr). The protein is HPr kinase/phosphorylase of Verminephrobacter eiseniae (strain EF01-2).